The chain runs to 752 residues: Iron-sulfur clusters transporter ABCB7, mitochondrial (752 aa).

A mitochondrion-targeting transit peptide spans 1-22 (MALLAMHSWRWAAAAAAFEKRR). Topologically, residues 23–140 (HSAILIRPLV…KDRPDLRARV (118 aa)) are mitochondrial matrix. In terms of domain architecture, ABC transmembrane type-1 spans 140 to 436 (VAISLGFLGG…LGTVYRETRQ (297 aa)). The chain crosses the membrane as a helical span at residues 141-161 (AISLGFLGGAKAMNIVVPFMF). Residues 162–185 (KYAVDSLNQMSGNMLNLSDAPNTV) are Mitochondrial intermembrane-facing. A helical transmembrane segment spans residues 186–206 (ATMATAVLIGYGVSRAGAAFF). Over 207–259 (NEVRNAVFGKVAQNSIRRIAKNVFLHLHNLDLGFHLSRQTGALSKAIDRGTRG) the chain is Mitochondrial matrix. Lys216 and Lys251 each carry N6-acetyllysine. A helical membrane pass occupies residues 260 to 280 (ISFVLSALVFNLLPIMFEVML). Over 281–290 (VSGVLYYKCG) the chain is Mitochondrial intermembrane. The helical transmembrane segment at 291 to 311 (AQFALVTLGTLGTYTAFTVAV) threads the bilayer. Residues 312 to 382 (TRWRTRFRIE…TLAMLNFGQS (71 aa)) lie on the Mitochondrial matrix side of the membrane. 315–319 (RTRFR) is a binding site for glutathione. Residue Ser336 is modified to Phosphoserine. Position 340 is a phosphotyrosine (Tyr340). Position 342 is a phosphothreonine (Thr342). Residue 378–381 (NFGQ) participates in glutathione binding. Residues 383 to 403 (AIFSVGLTAIMVLASQGIVAG) form a helical membrane-spanning segment. At 404–409 (TLTVGD) the chain is on the mitochondrial intermembrane side. The chain crosses the membrane as a helical span at residues 410–430 (LVMVNGLLFQLSLPLNFLGTV). Gly428 lines the glutathione pocket. The Mitochondrial matrix segment spans residues 431–752 (YRETRQALID…SVKGCGNCSC (322 aa)). An ABC transporter domain is found at 472 to 706 (VAFDNVHFEY…PHSIYSEMWH (235 aa)). Residues Tyr481 and 505–516 (GGSGSGKSTIVR) contribute to the ATP site.

It belongs to the ABC transporter superfamily. ABCB family. Heavy Metal importer (TC 3.A.1.210) subfamily. Homodimer or heterodimer. Interacts with C10orf88/PAAT. Forms a complex with ABCB10 and FECH, where a dimeric FECH bridges ABCB7 and ABCB10 homodimers; this complex may be required for cellular iron homeostasis, mitochondrial function and heme biosynthesis. Interacts with FECH. Interacts with ATP5F1A. Interacts with COX4I1; this interaction allows the regulation of cellular iron homeostasis and cellular reactive oxygen species (ROS) levels in cardiomyocytes.

Its subcellular location is the mitochondrion inner membrane. It catalyses the reaction (glutathione)4[2Fe(III)-2S] cluster(in) + ATP + H2O = (glutathione)4[2Fe(III)-2S] cluster(out) + ADP + phosphate + H(+). With respect to regulation, ATPase activity is stimulated by glutathione. Exports glutathione-coordinated iron-sulfur clusters such as [2Fe-2S]-(GS)4 cluster from the mitochondria to the cytosol in an ATP-dependent manner allowing the assembly of the cytosolic iron-sulfur (Fe/S) cluster-containing proteins and participates in iron homeostasis. Moreover, through a functional complex formed of ABCB7, FECH and ABCB10, also plays a role in the cellular iron homeostasis, mitochondrial function and heme biosynthesis. In cardiomyocytes, regulates cellular iron homeostasis and cellular reactive oxygen species (ROS) levels through its interaction with COX4I1. May also play a role in hematopoiesis. This chain is Iron-sulfur clusters transporter ABCB7, mitochondrial, found in Homo sapiens (Human).